The chain runs to 154 residues: 6,7-dimethyl-8-ribityllumazine synthase (154 aa).

Residues F23, 57–59 (AFE), and 81–83 (AII) each bind 5-amino-6-(D-ribitylamino)uracil. (2S)-2-hydroxy-3-oxobutyl phosphate is bound at residue 86–87 (ST). Residue H89 is the Proton donor of the active site. A 5-amino-6-(D-ribitylamino)uracil-binding site is contributed by F114. R128 is a binding site for (2S)-2-hydroxy-3-oxobutyl phosphate.

This sequence belongs to the DMRL synthase family.

The enzyme catalyses (2S)-2-hydroxy-3-oxobutyl phosphate + 5-amino-6-(D-ribitylamino)uracil = 6,7-dimethyl-8-(1-D-ribityl)lumazine + phosphate + 2 H2O + H(+). Its pathway is cofactor biosynthesis; riboflavin biosynthesis; riboflavin from 2-hydroxy-3-oxobutyl phosphate and 5-amino-6-(D-ribitylamino)uracil: step 1/2. In terms of biological role, catalyzes the formation of 6,7-dimethyl-8-ribityllumazine by condensation of 5-amino-6-(D-ribitylamino)uracil with 3,4-dihydroxy-2-butanone 4-phosphate. This is the penultimate step in the biosynthesis of riboflavin. The polypeptide is 6,7-dimethyl-8-ribityllumazine synthase (Nitratiruptor sp. (strain SB155-2)).